Consider the following 334-residue polypeptide: Holliday junction branch migration complex subunit RuvB (334 aa).

The large ATPase domain (RuvB-L) stretch occupies residues 4 to 184 (ADRLIQPQIQ…FGIPLRLEFY (181 aa)). Residues Arg-24, Gly-65, Lys-68, Thr-69, Thr-70, 131 to 133 (EDY), Arg-174, Tyr-184, and Arg-221 each bind ATP. Thr-69 lines the Mg(2+) pocket. The segment at 185–255 (NIKDLSTIVT…VAEHALDLLD (71 aa)) is small ATPAse domain (RuvB-S). A head domain (RuvB-H) region spans residues 258-334 (SEGFDYMDRK…YQHFELIKPE (77 aa)). Arg-294, Arg-313, and Arg-318 together coordinate DNA.

This sequence belongs to the RuvB family. In terms of assembly, homohexamer. Forms an RuvA(8)-RuvB(12)-Holliday junction (HJ) complex. HJ DNA is sandwiched between 2 RuvA tetramers; dsDNA enters through RuvA and exits via RuvB. An RuvB hexamer assembles on each DNA strand where it exits the tetramer. Each RuvB hexamer is contacted by two RuvA subunits (via domain III) on 2 adjacent RuvB subunits; this complex drives branch migration. In the full resolvosome a probable DNA-RuvA(4)-RuvB(12)-RuvC(2) complex forms which resolves the HJ.

It localises to the cytoplasm. The enzyme catalyses ATP + H2O = ADP + phosphate + H(+). In terms of biological role, the RuvA-RuvB-RuvC complex processes Holliday junction (HJ) DNA during genetic recombination and DNA repair, while the RuvA-RuvB complex plays an important role in the rescue of blocked DNA replication forks via replication fork reversal (RFR). RuvA specifically binds to HJ cruciform DNA, conferring on it an open structure. The RuvB hexamer acts as an ATP-dependent pump, pulling dsDNA into and through the RuvAB complex. RuvB forms 2 homohexamers on either side of HJ DNA bound by 1 or 2 RuvA tetramers; 4 subunits per hexamer contact DNA at a time. Coordinated motions by a converter formed by DNA-disengaged RuvB subunits stimulates ATP hydrolysis and nucleotide exchange. Immobilization of the converter enables RuvB to convert the ATP-contained energy into a lever motion, pulling 2 nucleotides of DNA out of the RuvA tetramer per ATP hydrolyzed, thus driving DNA branch migration. The RuvB motors rotate together with the DNA substrate, which together with the progressing nucleotide cycle form the mechanistic basis for DNA recombination by continuous HJ branch migration. Branch migration allows RuvC to scan DNA until it finds its consensus sequence, where it cleaves and resolves cruciform DNA. The protein is Holliday junction branch migration complex subunit RuvB of Shewanella baltica (strain OS195).